The primary structure comprises 174 residues: Large ribosomal subunit protein uL10 (174 aa).

It belongs to the universal ribosomal protein uL10 family. Part of the ribosomal stalk of the 50S ribosomal subunit. The N-terminus interacts with L11 and the large rRNA to form the base of the stalk. The C-terminus forms an elongated spine to which L12 dimers bind in a sequential fashion forming a multimeric L10(L12)X complex.

Its function is as follows. Forms part of the ribosomal stalk, playing a central role in the interaction of the ribosome with GTP-bound translation factors. This Geobacter metallireducens (strain ATCC 53774 / DSM 7210 / GS-15) protein is Large ribosomal subunit protein uL10.